A 375-amino-acid chain; its full sequence is All-trans-retinol dehydrogenase [NAD(+)] ADH1B (375 aa).

Ser2 carries the post-translational modification N-acetylserine. Ser23 carries the post-translational modification Phosphoserine. Tyr35 is modified (phosphotyrosine). Zn(2+) contacts are provided by Cys47, His68, Cys98, Cys101, Cys104, Cys112, and Cys175. Residues 200–205, Asp224, Lys229, 293–295, and Arg370 each bind NAD(+); these read GLGGVG and VGV.

Belongs to the zinc-containing alcohol dehydrogenase family. In terms of assembly, homodimer or heterodimer of closely related subunits. It depends on Zn(2+) as a cofactor. In terms of tissue distribution, expressed in liver.

The protein localises to the cytoplasm. It catalyses the reaction all-trans-retinol + NAD(+) = all-trans-retinal + NADH + H(+). The catalysed reaction is all-trans-4-hydroxyretinol + NAD(+) = all-trans-4-hydroxyretinal + NADH + H(+). The enzyme catalyses all-trans-4-oxoretinol + NAD(+) = all-trans-4-oxoretinal + NADH + H(+). In terms of biological role, catalyzes the NAD-dependent oxidation of all-trans-retinol and its derivatives such as all-trans-4-hydroxyretinol and may participate in retinoid metabolism. In vitro can also catalyze the NADH-dependent reduction of all-trans-retinal and its derivatives such as all-trans-4-oxoretinal. Catalyzes in the oxidative direction with higher efficiency. Has the same affinity for all-trans-4-hydroxyretinol and all-trans-4-oxoretinal. This chain is All-trans-retinol dehydrogenase [NAD(+)] ADH1B, found in Papio hamadryas (Hamadryas baboon).